A 109-amino-acid chain; its full sequence is MDVEEIKRKKLLELQKKLAEQQQQEEALLEAEMQKRALLRKILTPEARERLERIRLARPEFAEAVEVQLIQLAQLGRLPIPLSDEDFKALLERISALTKRKREIKIVRK.

It belongs to the PDCD5 family.

The protein is DNA-binding protein MJ0691 of Methanocaldococcus jannaschii (strain ATCC 43067 / DSM 2661 / JAL-1 / JCM 10045 / NBRC 100440) (Methanococcus jannaschii).